The primary structure comprises 76 residues: Tautomerase PptA (76 aa).

Catalysis depends on P2, which acts as the Proton acceptor; via imino nitrogen.

It belongs to the 4-oxalocrotonate tautomerase family. PptA subfamily. Homodimer.

The protein localises to the cytoplasm. This chain is Tautomerase PptA, found in Pectobacterium atrosepticum (strain SCRI 1043 / ATCC BAA-672) (Erwinia carotovora subsp. atroseptica).